The chain runs to 332 residues: Glycine betaine-binding periplasmic protein OusX (332 aa).

An N-terminal signal peptide occupies residues 1-21 (MRNISMATLALTTVLSTGLFA).

The complex is composed of two ATP-binding proteins (OusV), two transmembrane proteins (OusW) and a solute-binding protein (OusX).

It localises to the periplasm. In terms of biological role, part of the OusB ABC transporter complex involved in glycine betaine and choline uptake. Binds glycine betaine. This chain is Glycine betaine-binding periplasmic protein OusX, found in Dickeya dadantii (strain 3937) (Erwinia chrysanthemi (strain 3937)).